Reading from the N-terminus, the 1209-residue chain is Phospholipid-transporting ATPase ID (1209 aa).

Residues 1–68 (MTVPKEIPEK…NIVTFLPVNL (68 aa)) are Cytoplasmic-facing. The segment at 12–36 (ARAGAPPSWSQKKPSWGTEEERRAR) is disordered. A helical transmembrane segment spans residues 69-89 (FEQFQEVANTYFLFLLILQLI). Over 90 to 91 (PQ) the chain is Exoplasmic loop. Residues 92–112 (ISSLSWFTTIVPLVLVLTITA) traverse the membrane as a helical segment. The Cytoplasmic portion of the chain corresponds to 113 to 295 (VKDATDDYFR…TSIDRLMNTL (183 aa)). The helical transmembrane segment at 296–316 (VLWIFGFLVCMGVILAIGNAI) threads the bilayer. Residues 317 to 338 (WEHEVGTRFQVYLPWDEAVDSA) are Exoplasmic loop-facing. Residues 339–359 (FFSGFLSFWSYIIILNTVVPI) traverse the membrane as a helical segment. Residues 360-898 (SLYVSVEVIR…KFLCYFFYKN (539 aa)) are Cytoplasmic-facing. Asp411 acts as the 4-aspartylphosphate intermediate in catalysis. The ATP site is built by Asp411, Lys412, Thr413, Glu515, Phe556, Lys579, Arg613, Thr693, Gly694, Asp695, Arg807, and Lys813. Asp411 provides a ligand contact to Mg(2+). Thr413 contributes to the Mg(2+) binding site. Mg(2+) is bound at residue Asp833. Residues Asn836 and Asp837 each contribute to the ATP site. Mg(2+) is bound at residue Asp837. Residues 899–919 (FAFTMVHFWFGFFCGFSAQTV) form a helical membrane-spanning segment. Residues 920-922 (YDQ) lie on the Exoplasmic loop side of the membrane. The helical transmembrane segment at 923 to 943 (YFITLYNIVYTSLPVLAMGVF) threads the bilayer. Residues 944-972 (DQDVPEQRSMEYPKLYEPGQLNLLFNKRE) lie on the Cytoplasmic side of the membrane. Residues 973 to 993 (FFICIAQGIYTSVLMFFIPYG) form a helical membrane-spanning segment. At 994 to 1011 (VFAEATRDDGTQLADYQS) the chain is on the exoplasmic loop side. Residues 1012 to 1032 (FAVTVATSLVIVVSVQIGLDT) form a helical membrane-spanning segment. The Cytoplasmic segment spans residues 1033–1036 (GYWT). A helical transmembrane segment spans residues 1037-1057 (AINHFFIWGSLAVYFAILFAM). Over 1058–1082 (HSNGLFDMFPNQFRFVGNAQNTLAQ) the chain is Exoplasmic loop. The helical transmembrane segment at 1083–1103 (PTVWLTIALTTAVCIMPVVAF) threads the bilayer. The Cytoplasmic portion of the chain corresponds to 1104 to 1209 (RFLRLSLKPD…SGGAEKPLKG (106 aa)). Residue Ser1175 is modified to Phosphoserine. Residues 1179-1209 (RSSSSWIESLRRKKSDSANSPSGGAEKPLKG) form a disordered region.

This sequence belongs to the cation transport ATPase (P-type) (TC 3.A.3) family. Type IV subfamily. As to quaternary structure, component of a P4-ATPase flippase complex which consists of a catalytic alpha subunit ATP8B2 and an accessory beta subunit TMEM30A or TMEM30B. Mg(2+) is required as a cofactor. Expressed in brain and testes (at protein level).

The protein localises to the cell membrane. It is found in the endoplasmic reticulum membrane. The enzyme catalyses ATP + H2O + phospholipidSide 1 = ADP + phosphate + phospholipidSide 2.. The catalysed reaction is a 1,2-diacyl-sn-glycero-3-phosphocholine(out) + ATP + H2O = a 1,2-diacyl-sn-glycero-3-phosphocholine(in) + ADP + phosphate + H(+). In terms of biological role, catalytic component of P4-ATPase flippase complex, which catalyzes the hydrolysis of ATP coupled to the transport of phosphatidylcholine (PC) from the outer to the inner leaflet of the plasma membrane. May contribute to the maintenance of membrane lipid asymmetry. This is Phospholipid-transporting ATPase ID from Mus musculus (Mouse).